We begin with the raw amino-acid sequence, 250 residues long: Accessory gland-specific peptide 26Aa (250 aa).

Positions 1–18 (MNQILLCSQILLLFFTVA) are cleaved as a signal peptide. The interval 79–100 (DYPINNSKSRKNSSTLPSPILT) is disordered. Positions 82 to 95 (INNSKSRKNSSTLP) are enriched in polar residues. N-linked (GlcNAc...) asparagine glycans are attached at residues Asn83, Asn90, and Asn131. Disordered regions lie at residues 172–191 (NVQNARKSTKSCKKRPSKDI) and 230–250 (NNPATDVPTGKSPSEGNPSTT). Over residues 178 to 187 (KSTKSCKKRP) the composition is skewed to basic residues. A compositionally biased stretch (polar residues) spans 240–250 (KSPSEGNPSTT).

Proteolytically cleaved as it is secreted and in the recipient female. As to expression, main cells of the accessory glands of males.

The protein localises to the secreted. It is found in the extracellular space. In terms of biological role, this protein is transferred from male to female's hemolymph during mating, affecting egglaying and behavior after mating. This Drosophila mauritiana (Fruit fly) protein is Accessory gland-specific peptide 26Aa (Acp26Aa).